A 92-amino-acid chain; its full sequence is Cell division protein FtsB (92 aa).

Residues 1–3 (MKW) lie on the Cytoplasmic side of the membrane. A helical membrane pass occupies residues 4–21 (VTVVLSFALVCCQYSLWF). Topologically, residues 22 to 92 (GKGSIGRNSS…TFYRLIRHNR (71 aa)) are periplasmic. Residues 28–50 (RNSSLREQIAVQEEKNQTLALRN) are a coiled coil.

The protein belongs to the FtsB family. Part of a complex composed of FtsB, FtsL and FtsQ.

The protein localises to the cell inner membrane. Essential cell division protein. May link together the upstream cell division proteins, which are predominantly cytoplasmic, with the downstream cell division proteins, which are predominantly periplasmic. The sequence is that of Cell division protein FtsB from Neisseria meningitidis serogroup C (strain 053442).